We begin with the raw amino-acid sequence, 263 residues long: Putative TATA-binding protein pB263R (263 aa).

This sequence belongs to the asfivirus B263R family.

Its function is as follows. Putative TATA-binding protein. The protein is Putative TATA-binding protein pB263R of African swine fever virus (isolate Warthog/Namibia/Wart80/1980) (ASFV).